Here is a 423-residue protein sequence, read N- to C-terminus: Probable sucrose-phosphatase 3b (423 aa).

The protein belongs to the sucrose phosphatase family. Homodimer. The cofactor is Mg(2+).

It catalyses the reaction sucrose 6(F)-phosphate + H2O = sucrose + phosphate. It functions in the pathway glycan biosynthesis; sucrose biosynthesis; sucrose from D-fructose 6-phosphate and UDP-alpha-D-glucose: step 2/2. Catalyzes the final step of sucrose synthesis. This is Probable sucrose-phosphatase 3b (SPP3B) from Arabidopsis thaliana (Mouse-ear cress).